A 365-amino-acid chain; its full sequence is MASKTENSEKQKALNSVLNQIEKSFGKGSIVRLGDSARMKVETISSGALTLDLALGGGLPRGRVIEIYGPESSGKTTLALHAIAEIQKTGGIAAFVDAEHALDPTYAAALGVDIENLLVSQPDTGEMALEIVDQLVRSVAVDIVVVDSVAALVPRAEIEGDMGDSHMGLQARLMSQALRKITGNIGKSGCTVIFLNQLRQKIGIVYGNPETTTGGNALKFYASVRLDIRRTQTLKKGSDEYGIRAKVKVAKNKVAPPFRIAEFDIIFGQGISTIGCLIDLAEETGVIKRKGAWYSYNNENIGQGRDRTITYMQENPAFTEEIDKRVRAALAGGAVVSATSVVKLDDNPDTDDHDVEDIDENTDEE.

69 to 76 (GPESSGKT) provides a ligand contact to ATP. Residues 344–365 (LDDNPDTDDHDVEDIDENTDEE) are disordered. The segment covering 347-365 (NPDTDDHDVEDIDENTDEE) has biased composition (acidic residues).

It belongs to the RecA family.

The protein resides in the cytoplasm. Functionally, can catalyze the hydrolysis of ATP in the presence of single-stranded DNA, the ATP-dependent uptake of single-stranded DNA by duplex DNA, and the ATP-dependent hybridization of homologous single-stranded DNAs. It interacts with LexA causing its activation and leading to its autocatalytic cleavage. This chain is Protein RecA, found in Arthrospira platensis (Spirulina platensis).